A 425-amino-acid chain; its full sequence is Glutamyl-tRNA reductase (425 aa).

Residues 49 to 52, Ser-109, 114 to 116, and Gln-120 each bind substrate; these read TCNR and EGQ. Catalysis depends on Cys-50, which acts as the Nucleophile. Residue 189–194 participates in NADP(+) binding; the sequence is GAGETG.

The protein belongs to the glutamyl-tRNA reductase family. Homodimer.

The enzyme catalyses (S)-4-amino-5-oxopentanoate + tRNA(Glu) + NADP(+) = L-glutamyl-tRNA(Glu) + NADPH + H(+). Its pathway is porphyrin-containing compound metabolism; protoporphyrin-IX biosynthesis; 5-aminolevulinate from L-glutamyl-tRNA(Glu): step 1/2. It functions in the pathway porphyrin-containing compound metabolism; chlorophyll biosynthesis. Catalyzes the NADPH-dependent reduction of glutamyl-tRNA(Glu) to glutamate 1-semialdehyde (GSA). This chain is Glutamyl-tRNA reductase, found in Chlorobium phaeovibrioides (strain DSM 265 / 1930) (Prosthecochloris vibrioformis (strain DSM 265)).